The chain runs to 428 residues: Adenylosuccinate synthetase (428 aa).

GTP-binding positions include 12-18 (GDEGKGK) and 40-42 (GHT). Catalysis depends on Asp13, which acts as the Proton acceptor. Mg(2+)-binding residues include Asp13 and Gly40. Residues 13–16 (DEGK), 38–41 (NAGH), Thr128, Arg142, Gln223, Thr238, and Arg302 contribute to the IMP site. Residue His41 is the Proton donor of the active site. Residue 298 to 304 (TTTGRPR) coordinates substrate. Residues Arg304, 330 to 332 (KLD), and 412 to 414 (SVG) contribute to the GTP site.

It belongs to the adenylosuccinate synthetase family. Homodimer. Mg(2+) is required as a cofactor.

It is found in the cytoplasm. The enzyme catalyses IMP + L-aspartate + GTP = N(6)-(1,2-dicarboxyethyl)-AMP + GDP + phosphate + 2 H(+). Its pathway is purine metabolism; AMP biosynthesis via de novo pathway; AMP from IMP: step 1/2. Plays an important role in the de novo pathway of purine nucleotide biosynthesis. Catalyzes the first committed step in the biosynthesis of AMP from IMP. The sequence is that of Adenylosuccinate synthetase from Desulforamulus reducens (strain ATCC BAA-1160 / DSM 100696 / MI-1) (Desulfotomaculum reducens).